A 255-amino-acid chain; its full sequence is Pimeloyl-[acyl-carrier protein] methyl ester esterase (255 aa).

Residues 16–241 enclose the AB hydrolase-1 domain; sequence LVLLHGWGMN…QSSHAPFMTE (226 aa). Substrate contacts are provided by residues W22, 82–83, and 143–147; these read SL and FMALQ. S82 serves as the catalytic Nucleophile. Residues D207 and H235 contribute to the active site. H235 provides a ligand contact to substrate.

This sequence belongs to the AB hydrolase superfamily. Carboxylesterase BioH family. As to quaternary structure, monomer.

It localises to the cytoplasm. It catalyses the reaction 6-carboxyhexanoyl-[ACP] methyl ester + H2O = 6-carboxyhexanoyl-[ACP] + methanol + H(+). Its pathway is cofactor biosynthesis; biotin biosynthesis. The physiological role of BioH is to remove the methyl group introduced by BioC when the pimeloyl moiety is complete. It allows to synthesize pimeloyl-ACP via the fatty acid synthetic pathway through the hydrolysis of the ester bonds of pimeloyl-ACP esters. The sequence is that of Pimeloyl-[acyl-carrier protein] methyl ester esterase from Vibrio parahaemolyticus serotype O3:K6 (strain RIMD 2210633).